Consider the following 430-residue polypeptide: Enolase (430 aa).

A (2R)-2-phosphoglycerate-binding site is contributed by Q163. The active-site Proton donor is the E205. Mg(2+)-binding residues include D242, E288, and D315. (2R)-2-phosphoglycerate contacts are provided by K340, R369, S370, and K391. Residue K340 is the Proton acceptor of the active site.

The protein belongs to the enolase family. Mg(2+) serves as cofactor.

It is found in the cytoplasm. The protein localises to the secreted. It localises to the cell surface. The enzyme catalyses (2R)-2-phosphoglycerate = phosphoenolpyruvate + H2O. It functions in the pathway carbohydrate degradation; glycolysis; pyruvate from D-glyceraldehyde 3-phosphate: step 4/5. Catalyzes the reversible conversion of 2-phosphoglycerate (2-PG) into phosphoenolpyruvate (PEP). It is essential for the degradation of carbohydrates via glycolysis. This Aster yellows witches'-broom phytoplasma (strain AYWB) protein is Enolase.